The primary structure comprises 346 residues: Methylthioribose-1-phosphate isomerase (346 aa).

Substrate contacts are provided by residues 48-50 (RGA), R88, and Q192. Residue D233 is the Proton donor of the active site. 243 to 244 (NK) is a binding site for substrate.

It belongs to the eIF-2B alpha/beta/delta subunits family. MtnA subfamily.

It catalyses the reaction 5-(methylsulfanyl)-alpha-D-ribose 1-phosphate = 5-(methylsulfanyl)-D-ribulose 1-phosphate. It functions in the pathway amino-acid biosynthesis; L-methionine biosynthesis via salvage pathway; L-methionine from S-methyl-5-thio-alpha-D-ribose 1-phosphate: step 1/6. Its function is as follows. Catalyzes the interconversion of methylthioribose-1-phosphate (MTR-1-P) into methylthioribulose-1-phosphate (MTRu-1-P). This is Methylthioribose-1-phosphate isomerase from Alcanivorax borkumensis (strain ATCC 700651 / DSM 11573 / NCIMB 13689 / SK2).